The chain runs to 551 residues: MGVQTCAVAGRGVVAYLLAMTAAQNDRSASTPSVASAHDKILIVDFGSQVTQLIARRVREDGVYCEIVPFNKAEEAFKEMKPKAVILSGGPESVHEAGSPRAPQLIFASGVPVMGICYGQMTMAAQLGGEVEGGHHREFGRADVEVKAQSKLFEDVWSSGSKNQVWMSHGDRITKMPPGFSVAGTSPNAPFAIIQDEKRKYYGLMFHPEVVHTPDGAKLIRNFVRKIAGLTGDWTMRAFREEEIAKIRAQVGKGKVICGLSGGVDSAVAAVLIHEAIGDQLTCVFVDHGLMRLNEAEQVVDLFRHHYNIPLVHVDASKQFLGELEGVTDPETKRKTIGRLFIEVFEAEAKKIGGADFLAQGTLYPDVIESVSFTGGPSVTIKSHHNVGGLPERMNMKLVEPLRELFKDEVRKLGRELGLPEIFVGRHPFPGPGLAIRCPGDITSDKLDILRKADAVYIDQIRKHGLYDDIWQAFAVLLPVKTVGVMGDGRTYDYVVGLRAVTSTDGMTADFYQFDMKFLGETATRIINEVKGVNRVVYDVTSKPPGTIEWE.

The region spanning 40-233 (KILIVDFGSQ…VRKIAGLTGD (194 aa)) is the Glutamine amidotransferase type-1 domain. The Nucleophile role is filled by C117. Catalysis depends on residues H207 and E209. The GMPS ATP-PPase domain occupies 234–426 (WTMRAFREEE…LGLPEIFVGR (193 aa)). 261-267 (SGGVDSA) serves as a coordination point for ATP.

As to quaternary structure, homodimer.

It catalyses the reaction XMP + L-glutamine + ATP + H2O = GMP + L-glutamate + AMP + diphosphate + 2 H(+). The protein operates within purine metabolism; GMP biosynthesis; GMP from XMP (L-Gln route): step 1/1. Its function is as follows. Catalyzes the synthesis of GMP from XMP. The polypeptide is GMP synthase [glutamine-hydrolyzing] (Bradyrhizobium diazoefficiens (strain JCM 10833 / BCRC 13528 / IAM 13628 / NBRC 14792 / USDA 110)).